Consider the following 1085-residue polypeptide: Kinesin-like protein cut7 (1085 aa).

The disordered stretch occupies residues 1–70 (MAPRVAPGGS…TDHALHDENE (70 aa)). Over residues 24–37 (PVSTPNSHFRSASN) the composition is skewed to polar residues. Residues 72–421 (NINVVVRVRG…LEYAARAKSI (350 aa)) enclose the Kinesin motor domain. Residue 159–166 (GQTGTGKT) coordinates ATP. Coiled-coil stretches lie at residues 436-604 (LIKD…WNLK), 715-740 (ISSE…LRSL), and 897-955 (LALA…DSIK). Repeats lie at residues 987–998 (DESLCNLETTIE) and 999–1010 (DTSLVKLETTGD). Thr1011 carries the post-translational modification Phosphothreonine; by CDC2. A disordered region spans residues 1049–1085 (YTSSNQTNEPDVYDKPSNSSRTSLLRSSRSAYSKMKR). Residues 1065-1078 (SNSSRTSLLRSSRS) show a composition bias toward low complexity.

This sequence belongs to the TRAFAC class myosin-kinesin ATPase superfamily. Kinesin family. BimC subfamily.

It localises to the cytoplasm. The protein resides in the cytoskeleton. Its subcellular location is the microtubule organizing center. It is found in the spindle pole body. Functionally, could be a spindle pole body motor. On transition from G2 to M phase of the cell cycle, the spindle pole body duplicates; the daughter pole bodies seed microtubules which interdigitate to form a short spindle that elongates to span the nucleus at metaphase. Mutations at cut7 block spindle formation. The protein is Kinesin-like protein cut7 (cut7) of Schizosaccharomyces pombe (strain 972 / ATCC 24843) (Fission yeast).